A 580-amino-acid polypeptide reads, in one-letter code: Arginine--tRNA ligase (580 aa).

The 'HIGH' region motif lies at 127–137 (PNLAKEMHVGH).

Belongs to the class-I aminoacyl-tRNA synthetase family. In terms of assembly, monomer.

Its subcellular location is the cytoplasm. The enzyme catalyses tRNA(Arg) + L-arginine + ATP = L-arginyl-tRNA(Arg) + AMP + diphosphate. The chain is Arginine--tRNA ligase from Idiomarina loihiensis (strain ATCC BAA-735 / DSM 15497 / L2-TR).